Here is a 345-residue protein sequence, read N- to C-terminus: 3-dehydroquinate synthase (345 aa).

Residues 62–67, 96–100, 120–121, lysine 133, lysine 142, and 160–163 each bind NAD(+); these read DGEEYK, GVISD, TT, and FLKT. 3 residues coordinate Zn(2+): glutamate 175, histidine 233, and histidine 250.

It belongs to the sugar phosphate cyclases superfamily. Dehydroquinate synthase family. It depends on Co(2+) as a cofactor. Zn(2+) serves as cofactor. Requires NAD(+) as cofactor.

It localises to the cytoplasm. It carries out the reaction 7-phospho-2-dehydro-3-deoxy-D-arabino-heptonate = 3-dehydroquinate + phosphate. Its pathway is metabolic intermediate biosynthesis; chorismate biosynthesis; chorismate from D-erythrose 4-phosphate and phosphoenolpyruvate: step 2/7. Functionally, catalyzes the conversion of 3-deoxy-D-arabino-heptulosonate 7-phosphate (DAHP) to dehydroquinate (DHQ). The protein is 3-dehydroquinate synthase of Campylobacter concisus (strain 13826).